A 522-amino-acid polypeptide reads, in one-letter code: Protein nucleotidyltransferase YdiU (522 aa).

The ATP site is built by G109, G111, R112, K132, D144, G145, R195, and R202. Residue D271 is the Proton acceptor of the active site. Mg(2+)-binding residues include N272 and D281. An ATP-binding site is contributed by D281.

This sequence belongs to the SELO family. Mg(2+) serves as cofactor. Requires Mn(2+) as cofactor.

It catalyses the reaction L-seryl-[protein] + ATP = 3-O-(5'-adenylyl)-L-seryl-[protein] + diphosphate. The catalysed reaction is L-threonyl-[protein] + ATP = 3-O-(5'-adenylyl)-L-threonyl-[protein] + diphosphate. It carries out the reaction L-tyrosyl-[protein] + ATP = O-(5'-adenylyl)-L-tyrosyl-[protein] + diphosphate. The enzyme catalyses L-histidyl-[protein] + UTP = N(tele)-(5'-uridylyl)-L-histidyl-[protein] + diphosphate. It catalyses the reaction L-seryl-[protein] + UTP = O-(5'-uridylyl)-L-seryl-[protein] + diphosphate. The catalysed reaction is L-tyrosyl-[protein] + UTP = O-(5'-uridylyl)-L-tyrosyl-[protein] + diphosphate. In terms of biological role, nucleotidyltransferase involved in the post-translational modification of proteins. It can catalyze the addition of adenosine monophosphate (AMP) or uridine monophosphate (UMP) to a protein, resulting in modifications known as AMPylation and UMPylation. This Burkholderia ambifaria (strain MC40-6) protein is Protein nucleotidyltransferase YdiU.